Reading from the N-terminus, the 197-residue chain is Ion-translocating oxidoreductase complex subunit B (197 aa).

The hydrophobic stretch occupies residues 1–26; it reads MSTILIAIIALAALAAVFGAILGFAS. Positions 32–90 constitute a 4Fe-4S domain; the sequence is EADPIVDQIDSILPQTQCGQCGYPGCRPYAEAIANGDQINKCPPGGQATIEKLADLMGV. [4Fe-4S] cluster-binding residues include Cys-49, Cys-52, Cys-57, Cys-73, Cys-114, Cys-117, Cys-120, Cys-124, Cys-144, Cys-147, Cys-150, and Cys-154. 4Fe-4S ferredoxin-type domains follow at residues 105 to 134 and 135 to 164; these read TVAFIHEDMCIGCTKCIQACPVDAIVGGTK and ALHTVIKDECTGCDLCVAPCPTDCIEMIPV.

Belongs to the 4Fe4S bacterial-type ferredoxin family. RnfB subfamily. The complex is composed of six subunits: RnfA, RnfB, RnfC, RnfD, RnfE and RnfG. [4Fe-4S] cluster is required as a cofactor.

It localises to the cell inner membrane. In terms of biological role, part of a membrane-bound complex that couples electron transfer with translocation of ions across the membrane. This Vibrio campbellii (strain ATCC BAA-1116) protein is Ion-translocating oxidoreductase complex subunit B.